We begin with the raw amino-acid sequence, 187 residues long: Lysozyme C-like protein DDB_G0288143 (187 aa).

The signal sequence occupies residues 1-23 (MKVSNLISTITIASALCLSLTNA). 3 disulfide bridges follow: C50-C125, C74-C82, and C78-C97. E55 is a catalytic residue. Residues 133-187 (QHGSHSSTSRDSSSSSSRDSTGTGYSSSGSGTSGSGSNSGQTGHFIPGQSGHGLN) are disordered. Residues 136–175 (SHSSTSRDSSSSSSRDSTGTGYSSSGSGTSGSGSNSGQTG) show a composition bias toward low complexity.

The protein belongs to the glycosyl hydrolase 22 family.

The sequence is that of Lysozyme C-like protein DDB_G0288143 from Dictyostelium discoideum (Social amoeba).